A 521-amino-acid polypeptide reads, in one-letter code: Alkyl hydroperoxide reductase subunit F (521 aa).

Lys53 is subject to N6-acetyllysine. 214-229 contacts FAD; it reads DVLIVGSGPAGAAAAI. Cys345 and Cys348 are oxidised to a cystine. The residue at position 354 (Lys354) is an N6-acetyllysine. 357 to 371 serves as a coordination point for NAD(+); the sequence is RVAVIGGGNSGVEAA. 478–488 lines the FAD pocket; that stretch reads TNVKGVFAAGD.

This sequence belongs to the class-II pyridine nucleotide-disulfide oxidoreductase family. As to quaternary structure, homodimer. FAD serves as cofactor.

In terms of biological role, serves to protect the cell against DNA damage by alkyl hydroperoxides. It can use either NADH or NADPH as electron donor for direct reduction of redox dyes or of alkyl hydroperoxides when combined with the AhpC protein. The sequence is that of Alkyl hydroperoxide reductase subunit F (ahpF) from Escherichia coli (strain K12).